The sequence spans 285 residues: NAD kinase (285 aa).

Asp64 (proton acceptor) is an active-site residue. Residues 64-65, 138-139, Arg149, Arg166, Asp168, Leu176, 179-184, and Gln238 contribute to the NAD(+) site; these read DG, ND, and SGYTIS.

Belongs to the NAD kinase family. Requires a divalent metal cation as cofactor.

The protein resides in the cytoplasm. The enzyme catalyses NAD(+) + ATP = ADP + NADP(+) + H(+). In terms of biological role, involved in the regulation of the intracellular balance of NAD and NADP, and is a key enzyme in the biosynthesis of NADP. Catalyzes specifically the phosphorylation on 2'-hydroxyl of the adenosine moiety of NAD to yield NADP. In Lawsonia intracellularis (strain PHE/MN1-00), this protein is NAD kinase.